A 259-amino-acid chain; its full sequence is Ribosomal RNA small subunit methyltransferase J (259 aa).

Residues 107–108 (RD), 123–124 (ER), 159–160 (SS), and aspartate 177 each bind S-adenosyl-L-methionine.

It belongs to the methyltransferase superfamily. RsmJ family.

The protein localises to the cytoplasm. It catalyses the reaction guanosine(1516) in 16S rRNA + S-adenosyl-L-methionine = N(2)-methylguanosine(1516) in 16S rRNA + S-adenosyl-L-homocysteine + H(+). In terms of biological role, specifically methylates the guanosine in position 1516 of 16S rRNA. This is Ribosomal RNA small subunit methyltransferase J from Shewanella loihica (strain ATCC BAA-1088 / PV-4).